The chain runs to 843 residues: Excretory canal abnormal protein 6 (843 aa).

Disordered regions lie at residues 54 to 135, 568 to 601, 748 to 767, and 773 to 843; these read QLKD…EKKT, TLES…PAKT, TPLS…MTAE, and TMKP…PKWV. 2 stretches are compositionally biased toward pro residues: residues 66-76 and 83-103; these read TPPPPPPPPPL and APPP…PPPI. The FH2 domain occupies 127–512; that stretch reads FLPKKEKKTK…KEEKKETQTT (386 aa). Polar residues-rich tracts occupy residues 776–792 and 819–830; these read PSVS…TSSH and IPQSPTVTSSAR.

Belongs to the formin homology family. Expressed in the excretory cell and mostly accumulates at the tip of the excretory cell canals.

It is found in the cytoplasm. It localises to the cytoskeleton. Its function is as follows. Constitutively active protein required for microtubule and F-actin growth, structural maintenance and organization during excretory cell tubulogenesis. The protein is Excretory canal abnormal protein 6 of Caenorhabditis elegans.